Reading from the N-terminus, the 230-residue chain is Cytidylate kinase (230 aa).

Residue 10–18 participates in ATP binding; that stretch reads GFSSTGKST.

The protein belongs to the cytidylate kinase family. Type 1 subfamily.

It is found in the cytoplasm. The catalysed reaction is CMP + ATP = CDP + ADP. It catalyses the reaction dCMP + ATP = dCDP + ADP. The polypeptide is Cytidylate kinase (Flavobacterium johnsoniae (strain ATCC 17061 / DSM 2064 / JCM 8514 / BCRC 14874 / CCUG 350202 / NBRC 14942 / NCIMB 11054 / UW101) (Cytophaga johnsonae)).